We begin with the raw amino-acid sequence, 269 residues long: Achromobactin transport ATP-binding protein CbrD (269 aa).

Residues 4–240 (ITSRELTLGY…ALVKTVFNLD (237 aa)) form the ABC transporter domain. ATP is bound at residue 36 to 43 (GSNGCGKS).

It belongs to the ABC transporter superfamily.

Its subcellular location is the cell inner membrane. Its function is as follows. Part of the binding-protein-dependent transport system CbrABCD for uptake of the siderophore achromobactin. Probably responsible for energy coupling to the transport system. This Dickeya dadantii (strain 3937) (Erwinia chrysanthemi (strain 3937)) protein is Achromobactin transport ATP-binding protein CbrD (cbrD).